A 168-amino-acid chain; its full sequence is Cytochrome c-type biogenesis protein CcmE (168 aa).

Over 1-23 the chain is Cytoplasmic; that stretch reads MTTAPSGLPGTPLPPARRRERPR. Residues 24–44 form a helical; Signal-anchor for type II membrane protein membrane-spanning segment; that stretch reads WPLLVAGAAVLGLIGYMVLGN. The Extracellular segment spans residues 45 to 168; sequence ANSNLVYYVL…KILNDQSTKP (124 aa). The heme site is built by His137 and Tyr141. The interval 145–168 is disordered; the sequence is DSKGEGQYSQDDLKKILNDQSTKP.

It belongs to the CcmE/CycJ family.

It is found in the cell membrane. In terms of biological role, heme chaperone required for the biogenesis of c-type cytochromes. Transiently binds heme delivered by CcmC and transfers the heme to apo-cytochromes in a process facilitated by CcmF and CcmH. This chain is Cytochrome c-type biogenesis protein CcmE, found in Deinococcus radiodurans (strain ATCC 13939 / DSM 20539 / JCM 16871 / CCUG 27074 / LMG 4051 / NBRC 15346 / NCIMB 9279 / VKM B-1422 / R1).